Here is a 185-residue protein sequence, read N- to C-terminus: Elongation factor P (185 aa).

The protein belongs to the elongation factor P family.

The protein resides in the cytoplasm. Its pathway is protein biosynthesis; polypeptide chain elongation. Involved in peptide bond synthesis. Stimulates efficient translation and peptide-bond synthesis on native or reconstituted 70S ribosomes in vitro. Probably functions indirectly by altering the affinity of the ribosome for aminoacyl-tRNA, thus increasing their reactivity as acceptors for peptidyl transferase. This Herpetosiphon aurantiacus (strain ATCC 23779 / DSM 785 / 114-95) protein is Elongation factor P.